Consider the following 454-residue polypeptide: Chromosomal replication initiator protein DnaA (454 aa).

The tract at residues 1 to 74 (MFDLEKFWDS…IQSAYAYAGI (74 aa)) is domain I, interacts with DnaA modulators. The interval 74–116 (IDIYPVFVVKNGPTPSSERMLEPQPQAKPEKARPQGREFTKDL) is domain II. The segment at 88-112 (PSSERMLEPQPQAKPEKARPQGREF) is disordered. Positions 101 to 112 (KPEKARPQGREF) are enriched in basic and acidic residues. Residues 117-333 (RLNEKYTFEN…GALVKVQAQA (217 aa)) form a domain III, AAA+ region region. Residues Gly161, Gly163, Lys164, and Thr165 each coordinate ATP. Residues 334 to 454 (TIQKQDINIG…VSDLRQMLER (121 aa)) form a domain IV, binds dsDNA region.

This sequence belongs to the DnaA family. Oligomerizes as a right-handed, spiral filament on DNA at oriC.

The protein resides in the cytoplasm. In terms of biological role, plays an essential role in the initiation and regulation of chromosomal replication. ATP-DnaA binds to the origin of replication (oriC) to initiate formation of the DNA replication initiation complex once per cell cycle. Binds the DnaA box (a 9 base pair repeat at the origin) and separates the double-stranded (ds)DNA. Forms a right-handed helical filament on oriC DNA; dsDNA binds to the exterior of the filament while single-stranded (ss)DNA is stabiized in the filament's interior. The ATP-DnaA-oriC complex binds and stabilizes one strand of the AT-rich DNA unwinding element (DUE), permitting loading of DNA polymerase. After initiation quickly degrades to an ADP-DnaA complex that is not apt for DNA replication. Binds acidic phospholipids. The protein is Chromosomal replication initiator protein DnaA of Lactobacillus delbrueckii subsp. bulgaricus (strain ATCC 11842 / DSM 20081 / BCRC 10696 / JCM 1002 / NBRC 13953 / NCIMB 11778 / NCTC 12712 / WDCM 00102 / Lb 14).